A 1024-amino-acid polypeptide reads, in one-letter code: Beta-galactosidase (1024 aa).

Substrate contacts are provided by Asn103 and Asp202. Na(+) is bound at residue Asp202. Mg(2+) contacts are provided by Glu417, His419, and Glu462. Substrate is bound by residues Glu462 and 538-541; that span reads EYAH. Residue Glu462 is the Proton donor of the active site. The Nucleophile role is filled by Glu538. Asn598 contributes to the Mg(2+) binding site. Na(+) is bound by residues Phe602 and Asn605. Substrate-binding residues include Asn605 and Trp1000.

This sequence belongs to the glycosyl hydrolase 2 family. In terms of assembly, homotetramer. Mg(2+) serves as cofactor. The cofactor is Na(+).

It carries out the reaction Hydrolysis of terminal non-reducing beta-D-galactose residues in beta-D-galactosides.. The sequence is that of Beta-galactosidase from Escherichia coli O139:H28 (strain E24377A / ETEC).